Consider the following 386-residue polypeptide: Nucleosome assembly protein 1-like 4 (386 aa).

The disordered stretch occupies residues 1–28 (MAENSLSDGGPADSVEAAKNASNTEKLT). Alanine 2 carries the N-acetylalanine modification. Phosphoserine occurs at positions 5, 7, and 49. Position 51 is a phosphothreonine (threonine 51). Residues serine 53 and serine 54 each carry the phosphoserine modification. Phosphothreonine is present on threonine 58. Lysine 105 bears the N6-acetyllysine mark. A Phosphoserine modification is found at serine 125. At lysine 146 the chain carries N6-acetyllysine. A Nuclear localization signal motif is present at residues 265-271 (IKKKQKH). Serine 304 is subject to Phosphoserine. The span at 339–370 (AIEDDDNFEEGEEGEEEELEGDEEGEDEDDAD) shows a compositional bias: acidic residues. Residues 339–386 (AIEDDDNFEEGEEGEEEELEGDEEGEDEDDADVNPKKEPIQPAECKQQ) form a disordered region.

This sequence belongs to the nucleosome assembly protein (NAP) family. In terms of assembly, interacts with core (H2A, H2B, H3, H4) and linker (H1) histones. In terms of processing, polyglutamylated and polyglycylated. These 2 modifications occur exclusively on glutamate residues and result in either polyglutamate or polyglycine chains on the gamma-carboxyl group. Both modifications can coexist on the same protein on adjacent residues, and lowering polyglycylation levels increases polyglutamylation, and reciprocally. Polyglutamylated by TTLL4. Phosphorylated at the G0/G1 boundary but it is not phosphorylated in S-phase. Phosphorylated protein remains in the cytoplasm in a complex with histones during the G0/G1 transition, whereas dephosphorylation triggers its transport into the nucleus at the G1/S-boundary.

It localises to the nucleus. Its subcellular location is the cytoplasm. Functionally, acts as a histone chaperone in nucleosome assembly. The protein is Nucleosome assembly protein 1-like 4 (Nap1l4) of Rattus norvegicus (Rat).